The chain runs to 153 residues: Aspartate carbamoyltransferase regulatory chain (153 aa).

Cysteine 109, cysteine 114, cysteine 138, and cysteine 141 together coordinate Zn(2+).

It belongs to the PyrI family. As to quaternary structure, contains catalytic and regulatory chains. It depends on Zn(2+) as a cofactor.

Involved in allosteric regulation of aspartate carbamoyltransferase. The protein is Aspartate carbamoyltransferase regulatory chain of Vibrio vulnificus (strain CMCP6).